The sequence spans 375 residues: Dihydroorotate dehydrogenase (quinone) (375 aa).

Residues 78–82 (AGLDK) and Thr102 contribute to the FMN site. Lys82 lines the substrate pocket. 127-131 (NRMGF) lines the substrate pocket. The FMN site is built by Asn159 and Asn192. Asn192 provides a ligand contact to substrate. Ser195 functions as the Nucleophile in the catalytic mechanism. Asn197 is a substrate binding site. FMN is bound by residues Lys230 and Thr258. 259–260 (NT) serves as a coordination point for substrate. FMN is bound by residues Gly288, Gly317, and 338-339 (YT).

The protein belongs to the dihydroorotate dehydrogenase family. Type 2 subfamily. In terms of assembly, monomer. It depends on FMN as a cofactor.

It is found in the cell membrane. The enzyme catalyses (S)-dihydroorotate + a quinone = orotate + a quinol. Its pathway is pyrimidine metabolism; UMP biosynthesis via de novo pathway; orotate from (S)-dihydroorotate (quinone route): step 1/1. In terms of biological role, catalyzes the conversion of dihydroorotate to orotate with quinone as electron acceptor. This is Dihydroorotate dehydrogenase (quinone) from Cyanothece sp. (strain PCC 7425 / ATCC 29141).